The chain runs to 157 residues: SsrA-binding protein (157 aa).

The protein belongs to the SmpB family.

It is found in the cytoplasm. Its function is as follows. Required for rescue of stalled ribosomes mediated by trans-translation. Binds to transfer-messenger RNA (tmRNA), required for stable association of tmRNA with ribosomes. tmRNA and SmpB together mimic tRNA shape, replacing the anticodon stem-loop with SmpB. tmRNA is encoded by the ssrA gene; the 2 termini fold to resemble tRNA(Ala) and it encodes a 'tag peptide', a short internal open reading frame. During trans-translation Ala-aminoacylated tmRNA acts like a tRNA, entering the A-site of stalled ribosomes, displacing the stalled mRNA. The ribosome then switches to translate the ORF on the tmRNA; the nascent peptide is terminated with the 'tag peptide' encoded by the tmRNA and targeted for degradation. The ribosome is freed to recommence translation, which seems to be the essential function of trans-translation. This chain is SsrA-binding protein, found in Clostridium kluyveri (strain NBRC 12016).